Reading from the N-terminus, the 267-residue chain is DNA repair protein RecO (267 aa).

Belongs to the RecO family.

Involved in DNA repair and RecF pathway recombination. The sequence is that of DNA repair protein RecO from Mesoplasma florum (strain ATCC 33453 / NBRC 100688 / NCTC 11704 / L1) (Acholeplasma florum).